The sequence spans 777 residues: Subtilisin-like protease SBT3.7 (777 aa).

An N-terminal signal peptide occupies residues 1 to 22 (MRNHRTSIFVVLSLVIILNGQS). Positions 23-113 (GFLPRAGAES…VIPDRFYKPA (91 aa)) are cleaved as a propeptide — activation peptide. One can recognise an Inhibitor I9 domain in the interval 34–111 (VHIVYLGEKQ…VHVIPDRFYK (78 aa)). In terms of domain architecture, Peptidase S8 spans 117-624 (TWDYLGLSPT…GGLVNPEKAT (508 aa)). An N-linked (GlcNAc...) asparagine glycan is attached at Asn-133. Catalysis depends on Asp-147, which acts as the Charge relay system. N-linked (GlcNAc...) asparagine glycosylation is found at Asn-180 and Asn-206. His-222 serves as the catalytic Charge relay system. 4 N-linked (GlcNAc...) asparagine glycosylation sites follow: Asn-237, Asn-397, Asn-412, and Asn-540. Residues 386 to 481 (SLVYPENPGN…ELGTYILFYI (96 aa)) enclose the PA domain. The Charge relay system role is filled by Ser-555. Residues Asn-647, Asn-723, and Asn-758 are each glycosylated (N-linked (GlcNAc...) asparagine).

This sequence belongs to the peptidase S8 family.

It localises to the secreted. The protein is Subtilisin-like protease SBT3.7 of Arabidopsis thaliana (Mouse-ear cress).